A 1411-amino-acid polypeptide reads, in one-letter code: Protein three rows (1411 aa).

The segment at 1065-1071 (VEPIRKQ) is separase cleavage-site. 3 disordered regions span residues 1221–1240 (LEPPSKPQNPRRALTFNISP), 1268–1301 (VRPASSTTSSSSSSSSSENASSPERKSTKSKSPK), and 1330–1411 (AKST…RHRN). Composition is skewed to low complexity over residues 1270-1289 (PASSTTSSSSSSSSSENASS) and 1386-1398 (TAEQPTTTTTATP).

In terms of assembly, interacts with pim and Sse. Cleavage of thr contributes to inactivation of Sse.

The protein localises to the cytoplasm. Functionally, required specifically for chromosome disjunction during all mitoses; maternally provided protein is sufficient until mitosis 14 then zygotic protein is required. Involved in formation and/or maintenance of epithelial structures: bud extension during Malpighian tubule development, and foregut and hindgut morphogenesis. This Drosophila virilis (Fruit fly) protein is Protein three rows (thr).